A 587-amino-acid polypeptide reads, in one-letter code: MTSSIECKNFLRSLQLLNLLIKIGVQNLIVCPGSRSAPLAIAAGELNKLGLVNIFNSIDERSAGFHSLGISAASGNLSLVITTSGTAVSNLLPAAVEADRSCKGIIFLTADRPLRLKDCGSNQTVNQEDFLSSVCRRVLSTNLNGLHETQENEILNLVRIIEKQISTFPGPIHLNIPIDKPLGISFLNKKNVLEVFKRIYLKKKYIFQEFEIKSDKKKFLEISKSLNLDESGIILVGPYQGSVNDLTSFNKSLERLQEITGWPVFADPVSGVYSDLRGLVVNWELVLRKNKNSINCHQLLRLGPMSSSIDLEKFLINFEGIQILIKEKNYRKLDPIKKSFEYDFGLSNFTTLLIEELSINEKNKKSLIPMALDLIEEGEQIKEILKEKITQDNQITEYMLANRVPKLWPAENPIMLSASSPIRDWLTFSENGTLTRNCFSFRGASGIDGTLSLAVGIARIKNPLLLVTGDLAFIHDINGWLIENSVDMNLTILLIDNNGGNIFNRIYKENLKEDELRKLFLMPKEINWPKLAEGYQVNFKNVANFKKLREALDWSISIQKSVIIKVDIDPENEIFEKNALLEKIIGS.

The protein belongs to the TPP enzyme family. MenD subfamily. As to quaternary structure, homodimer. Mg(2+) serves as cofactor. Requires Mn(2+) as cofactor. Thiamine diphosphate is required as a cofactor.

The enzyme catalyses isochorismate + 2-oxoglutarate + H(+) = 5-enolpyruvoyl-6-hydroxy-2-succinyl-cyclohex-3-ene-1-carboxylate + CO2. It functions in the pathway quinol/quinone metabolism; 1,4-dihydroxy-2-naphthoate biosynthesis; 1,4-dihydroxy-2-naphthoate from chorismate: step 2/7. It participates in cofactor biosynthesis; phylloquinone biosynthesis. Its function is as follows. Catalyzes the thiamine diphosphate-dependent decarboxylation of 2-oxoglutarate and the subsequent addition of the resulting succinic semialdehyde-thiamine pyrophosphate anion to isochorismate to yield 2-succinyl-5-enolpyruvyl-6-hydroxy-3-cyclohexene-1-carboxylate (SEPHCHC). The polypeptide is 2-succinyl-5-enolpyruvyl-6-hydroxy-3-cyclohexene-1-carboxylate synthase (Prochlorococcus marinus (strain MIT 9215)).